The primary structure comprises 69 residues: Metallothionein-like protein 3 (69 aa).

It belongs to the metallothionein superfamily. Type 15 family. Expressed in leaf mesophyll cells, root tips, and at low levels in anthers.

Metallothioneins have a high content of cysteine residues that bind various heavy metals. Functions as a metal chelator of copper (Cu) and zinc (Zn). Plays a role in Cu homeostasis, specifically in the remobilization of Cu from senescing leaves. The mobilization of Cu from internal sources is important for seed development. This chain is Metallothionein-like protein 3, found in Arabidopsis thaliana (Mouse-ear cress).